We begin with the raw amino-acid sequence, 347 residues long: Mediator of RNA polymerase II transcription subunit 7 (347 aa).

2 disordered regions span residues 97 to 172 (GIER…TQTH) and 302 to 326 (VPVGARTGTTVGDRRVGVDGEGAEE). Low complexity-rich tracts occupy residues 108 to 171 (STTT…STQT) and 302 to 312 (VPVGARTGTTV).

Belongs to the Mediator complex subunit 7 family. In terms of assembly, component of the Mediator complex.

The protein localises to the nucleus. In terms of biological role, component of the Mediator complex, a coactivator involved in the regulated transcription of nearly all RNA polymerase II-dependent genes. Mediator functions as a bridge to convey information from gene-specific regulatory proteins to the basal RNA polymerase II transcription machinery. Mediator is recruited to promoters by direct interactions with regulatory proteins and serves as a scaffold for the assembly of a functional preinitiation complex with RNA polymerase II and the general transcription factors. The protein is Mediator of RNA polymerase II transcription subunit 7 (med-7) of Neurospora crassa (strain ATCC 24698 / 74-OR23-1A / CBS 708.71 / DSM 1257 / FGSC 987).